Consider the following 266-residue polypeptide: Mitochondrial import inner membrane translocase subunit Tim29 (266 aa).

The transit peptide at 1 to 37 (MVTAALKRFWSGGHGEAGGEAGGATTVAVKPGLWTRL) directs the protein to the mitochondrion. At 38–65 (STWAGALLRDYAEACGDAAAAARARPGR) the chain is on the mitochondrial matrix side. The helical transmembrane segment at 66–83 (AALYVGLLGGAAACCALA) threads the bilayer. The Mitochondrial intermembrane segment spans residues 84-266 (PSEAAFEEAL…DSLVQSDVSR (183 aa)).

Component of the TIM22 complex, which core is composed of TIMM22, associated with TIMM10 (TIMM10A and/or TIMM10B), TIMM9, AGK and TIMM29. Interacts with TIMM10B; the interaction is direct. Interacts with TOMM40; linking the TIM22 complex to the TOM complex. Interacts with TIMM22 (when oxidized); the interaction is direct.

It is found in the mitochondrion inner membrane. In terms of biological role, component of the TIM22 complex, a complex that mediates the import and insertion of multi-pass transmembrane proteins into the mitochondrial inner membrane. The TIM22 complex forms a twin-pore translocase that uses the membrane potential as the external driving force. Required for the stability of the TIM22 complex and functions in the assembly of the TIMM22 protein into the TIM22 complex. May facilitate cooperation between TIM22 and TOM complexes by interacting with TOMM40. The protein is Mitochondrial import inner membrane translocase subunit Tim29 (Timm29) of Mus musculus (Mouse).